The sequence spans 431 residues: Dihydroorotase (431 aa).

Zn(2+)-binding residues include His-59 and His-61. Substrate-binding positions include 61–63 (HLR) and Asn-93. The Zn(2+) site is built by Asp-151, His-178, His-231, and Asp-304. Asp-304 is a catalytic residue. Substrate is bound by residues His-308 and 322–323 (FG).

It belongs to the metallo-dependent hydrolases superfamily. DHOase family. Class I DHOase subfamily. The cofactor is Zn(2+).

It catalyses the reaction (S)-dihydroorotate + H2O = N-carbamoyl-L-aspartate + H(+). Its pathway is pyrimidine metabolism; UMP biosynthesis via de novo pathway; (S)-dihydroorotate from bicarbonate: step 3/3. In terms of biological role, catalyzes the reversible cyclization of carbamoyl aspartate to dihydroorotate. The protein is Dihydroorotase of Caldanaerobacter subterraneus subsp. tengcongensis (strain DSM 15242 / JCM 11007 / NBRC 100824 / MB4) (Thermoanaerobacter tengcongensis).